A 276-amino-acid polypeptide reads, in one-letter code: Protein-glutamine gamma-glutamyltransferase (276 aa).

It belongs to the bacillus TGase family.

The catalysed reaction is L-glutaminyl-[protein] + L-lysyl-[protein] = [protein]-L-lysyl-N(6)-5-L-glutamyl-[protein] + NH4(+). In terms of biological role, probably plays a role in the assembly of the spore coat proteins by catalyzing epsilon-(gamma-glutamyl)lysine cross-links. The protein is Protein-glutamine gamma-glutamyltransferase of Bacillus cereus (strain G9842).